A 24-amino-acid polypeptide reads, in one-letter code: 60 kDa chaperonin, mitochondrial (24 aa).

Belongs to the chaperonin (HSP60) family. As to quaternary structure, forms a single seven-member ring complex, in tight association with the p63 protein. Testis.

It localises to the mitochondrion. Implicated in mitochondrial protein import and macromolecular assembly. May facilitate the correct folding of imported proteins. May also prevent misfolding and promote the refolding and proper assembly of unfolded polypeptides generated under stress conditions in the mitochondrial matrix. The protein is 60 kDa chaperonin, mitochondrial of Heliothis virescens (Tobacco budworm moth).